The primary structure comprises 310 residues: tRNA uridine(34) hydroxylase (310 aa).

Residues 134–232 (DDPDTLLIDT…YFEEVSQSES (99 aa)) form the Rhodanese domain. The Cysteine persulfide intermediate role is filled by Cys-192.

This sequence belongs to the TrhO family.

The catalysed reaction is uridine(34) in tRNA + AH2 + O2 = 5-hydroxyuridine(34) in tRNA + A + H2O. Its function is as follows. Catalyzes oxygen-dependent 5-hydroxyuridine (ho5U) modification at position 34 in tRNAs. The protein is tRNA uridine(34) hydroxylase of Prochlorococcus marinus (strain MIT 9303).